The chain runs to 243 residues: Octanoyltransferase (243 aa).

The region spanning 49 to 227 is the BPL/LPL catalytic domain; sequence PLAPQAVWLL…SLSDRFGLVW (179 aa). Residues 91 to 98, 158 to 160, and 171 to 173 contribute to the substrate site; these read RGGEVTHH, AIG, and GLA. The Acyl-thioester intermediate role is filled by C189.

The protein belongs to the LipB family.

The protein localises to the cytoplasm. It carries out the reaction octanoyl-[ACP] + L-lysyl-[protein] = N(6)-octanoyl-L-lysyl-[protein] + holo-[ACP] + H(+). It participates in protein modification; protein lipoylation via endogenous pathway; protein N(6)-(lipoyl)lysine from octanoyl-[acyl-carrier-protein]: step 1/2. Functionally, catalyzes the transfer of endogenously produced octanoic acid from octanoyl-acyl-carrier-protein onto the lipoyl domains of lipoate-dependent enzymes. Lipoyl-ACP can also act as a substrate although octanoyl-ACP is likely to be the physiological substrate. This chain is Octanoyltransferase, found in Prochlorococcus marinus (strain MIT 9313).